A 1084-amino-acid polypeptide reads, in one-letter code: Teashirt homolog 1 (1084 aa).

Disordered regions lie at residues 49–108, 140–167, and 269–298; these read EETE…SVSY, NSAT…TAST, and GHYR…MEME. 2 stretches are compositionally biased toward polar residues: residues 57–71 and 140–152; these read QSYQ…TNQD and NSAT…SQKE. 2 C2H2-type zinc fingers span residues 246 to 270 and 307 to 331; these read FRCK…ETGH and LKCM…KTKH. A compositionally biased stretch (basic and acidic residues) spans 269-284; that stretch reads GHYRDDNRDKDSEKTK. Residues 416-440 form a C2H2-type 3; atypical zinc finger; it reads LKCMECGSSHDTLQQLTAHMMVTGH. 2 disordered regions span residues 467 to 534 and 653 to 728; these read SIPL…EKFE and TGKV…LKAK. Composition is skewed to basic and acidic residues over residues 496 to 534, 653 to 671, and 681 to 714; these read SEEK…EKFE, TGKV…EKSS, and KENK…ESTL. S771 carries the post-translational modification Phosphoserine. Residues 855-879 are disordered; it reads GRLTPKSSTPSTVSEKSDADGSSFE. Residues 859 to 868 show a composition bias toward polar residues; the sequence is PKSSTPSTVS. The segment at residues 891 to 961 is a DNA-binding region (homeobox; atypical); sequence RKGRQSNWNP…NVKYQLRRTG (71 aa). 2 C2H2-type zinc fingers span residues 976 to 998 and 1044 to 1067; these read FFCN…LETH and FQCK…SKTH.

This sequence belongs to the teashirt C2H2-type zinc-finger protein family. As to quaternary structure, interacts (via homeobox domain) with APBB1 (via PID domain 1).

The protein localises to the nucleus. Probable transcriptional regulator involved in developmental processes. May act as a transcriptional repressor (Potential). The chain is Teashirt homolog 1 (Tshz1) from Mus musculus (Mouse).